Consider the following 162-residue polypeptide: tRNA (cytidine(34)-2'-O)-methyltransferase (162 aa).

4 residues coordinate S-adenosyl-L-methionine: Leu83, Gly105, Ile127, and Ser135.

It belongs to the class IV-like SAM-binding methyltransferase superfamily. RNA methyltransferase TrmH family. TrmL subfamily. Homodimer.

The protein resides in the cytoplasm. It carries out the reaction cytidine(34) in tRNA + S-adenosyl-L-methionine = 2'-O-methylcytidine(34) in tRNA + S-adenosyl-L-homocysteine + H(+). The catalysed reaction is 5-carboxymethylaminomethyluridine(34) in tRNA(Leu) + S-adenosyl-L-methionine = 5-carboxymethylaminomethyl-2'-O-methyluridine(34) in tRNA(Leu) + S-adenosyl-L-homocysteine + H(+). Its function is as follows. Methylates the ribose at the nucleotide 34 wobble position in the two leucyl isoacceptors tRNA(Leu)(CmAA) and tRNA(Leu)(cmnm5UmAA). Catalyzes the methyl transfer from S-adenosyl-L-methionine to the 2'-OH of the wobble nucleotide. The polypeptide is tRNA (cytidine(34)-2'-O)-methyltransferase (Photorhabdus asymbiotica subsp. asymbiotica (strain ATCC 43949 / 3105-77) (Xenorhabdus luminescens (strain 2))).